The sequence spans 385 residues: Acetylornithine deacetylase (385 aa).

H80 provides a ligand contact to Zn(2+). Residue D82 is part of the active site. Residue D112 participates in Zn(2+) binding. Catalysis depends on E144, which acts as the Proton acceptor. The Zn(2+) site is built by E145, E169, and H355.

This sequence belongs to the peptidase M20A family. ArgE subfamily. Homodimer. Zn(2+) serves as cofactor. Requires Co(2+) as cofactor. It depends on glutathione as a cofactor.

The protein localises to the cytoplasm. It catalyses the reaction N(2)-acetyl-L-ornithine + H2O = L-ornithine + acetate. Its pathway is amino-acid biosynthesis; L-arginine biosynthesis; L-ornithine from N(2)-acetyl-L-ornithine (linear): step 1/1. In terms of biological role, catalyzes the hydrolysis of the amide bond of N(2)-acetylated L-amino acids. Cleaves the acetyl group from N-acetyl-L-ornithine to form L-ornithine, an intermediate in L-arginine biosynthesis pathway, and a branchpoint in the synthesis of polyamines. In Photorhabdus laumondii subsp. laumondii (strain DSM 15139 / CIP 105565 / TT01) (Photorhabdus luminescens subsp. laumondii), this protein is Acetylornithine deacetylase.